The primary structure comprises 103 residues: MASETMGIALGMIETRGLVPAIEAADAMTKAAEVRLIGREFVGGGYVTVLVRGETGAVNAAVRAGADACERVGDGLVAAHIIARPHREVEPALGNGNFLGQKD.

The region spanning 9-94 (ALGMIETRGL…PHREVEPALG (86 aa)) is the BMC domain.

The protein belongs to the bacterial microcompartments protein family. CsoS1 subfamily. In terms of assembly, homohexamer with a small central pore. Forms a CsoS2-CsoS1-RuBisCO complex.

The protein resides in the carboxysome. One of the shell proteins of the carboxysome, a polyhedral inclusion where RuBisCO (ribulose bisphosphate carboxylase, ccbL-ccbS) is sequestered. Assembles into hexamers which make sheets that form the facets of the polyhedral carboxysome. The polypeptide is Carboxysome shell protein CsoS1 (Prochlorococcus marinus (strain MIT 9313)).